Reading from the N-terminus, the 169-residue chain is MAYATILMIFSVVALMSGERAHAAVDCSSLILNMADCLSFVTSGSTVVKPEGTCCSGLKTVVRTGPECLCEAFKNSGSLGLTLDLSKAASLPSVCKVAAPPSARCGLSVSGDPPATAPGLSPTAGAGAPALSSGANAATPVSSPRSSDASLLSVSFAFVIFMALISSFY.

The first 23 residues, 1 to 23, serve as a signal peptide directing secretion; sequence MAYATILMIFSVVALMSGERAHA. 4 disulfides stabilise this stretch: C27–C70, C37–C54, C55–C95, and C68–C105. The GPI-anchor amidated serine moiety is linked to residue S146. A propeptide spans 147–169 (removed in mature form); sequence SDASLLSVSFAFVIFMALISSFY.

The protein belongs to the plant LTP family. Expressed in a vascular-specific manner, mainly in roots, and, to a lower extent, in hypocotyls, seedlings stems and flowers.

The protein localises to the cell membrane. It localises to the secreted. In terms of biological role, probable lipid transfer protein. Proteoglycan-like factor that exhibits xylogen activity consisting in mediating local and inductive cell-cell interactions required for xylem differentiation. In Arabidopsis thaliana (Mouse-ear cress), this protein is Non-specific lipid transfer protein GPI-anchored 11.